Here is a 90-residue protein sequence, read N- to C-terminus: Probable Fe(2+)-trafficking protein (90 aa).

This sequence belongs to the Fe(2+)-trafficking protein family. Monomer.

In terms of biological role, could be a mediator in iron transactions between iron acquisition and iron-requiring processes, such as synthesis and/or repair of Fe-S clusters in biosynthetic enzymes. The chain is Probable Fe(2+)-trafficking protein from Pectobacterium carotovorum subsp. carotovorum (strain PC1).